A 205-amino-acid polypeptide reads, in one-letter code: Probable thymidylate kinase (205 aa).

Residue 10-17 (GIDGSGKT) coordinates ATP.

It belongs to the thymidylate kinase family.

The enzyme catalyses dTMP + ATP = dTDP + ADP. The chain is Probable thymidylate kinase (tmk) from Pyrococcus abyssi (strain GE5 / Orsay).